A 404-amino-acid polypeptide reads, in one-letter code: 4-hydroxy-3-methylbut-2-enyl diphosphate reductase (404 aa).

[4Fe-4S] cluster is bound at residue cysteine 66. (2E)-4-hydroxy-3-methylbut-2-enyl diphosphate is bound at residue histidine 96. Dimethylallyl diphosphate is bound at residue histidine 96. Histidine 96 is an isopentenyl diphosphate binding site. Position 157 (cysteine 157) interacts with [4Fe-4S] cluster. Histidine 185 provides a ligand contact to (2E)-4-hydroxy-3-methylbut-2-enyl diphosphate. Histidine 185 is a binding site for dimethylallyl diphosphate. Histidine 185 is a binding site for isopentenyl diphosphate. Catalysis depends on glutamate 187, which acts as the Proton donor. Residue threonine 250 participates in (2E)-4-hydroxy-3-methylbut-2-enyl diphosphate binding. Residue cysteine 288 coordinates [4Fe-4S] cluster. Residues serine 317, serine 318, asparagine 319, and serine 380 each contribute to the (2E)-4-hydroxy-3-methylbut-2-enyl diphosphate site. Residues serine 317, serine 318, asparagine 319, and serine 380 each coordinate dimethylallyl diphosphate. Isopentenyl diphosphate contacts are provided by serine 317, serine 318, asparagine 319, and serine 380.

The protein belongs to the IspH family. [4Fe-4S] cluster is required as a cofactor.

The catalysed reaction is isopentenyl diphosphate + 2 oxidized [2Fe-2S]-[ferredoxin] + H2O = (2E)-4-hydroxy-3-methylbut-2-enyl diphosphate + 2 reduced [2Fe-2S]-[ferredoxin] + 2 H(+). It catalyses the reaction dimethylallyl diphosphate + 2 oxidized [2Fe-2S]-[ferredoxin] + H2O = (2E)-4-hydroxy-3-methylbut-2-enyl diphosphate + 2 reduced [2Fe-2S]-[ferredoxin] + 2 H(+). The protein operates within isoprenoid biosynthesis; dimethylallyl diphosphate biosynthesis; dimethylallyl diphosphate from (2E)-4-hydroxy-3-methylbutenyl diphosphate: step 1/1. Its pathway is isoprenoid biosynthesis; isopentenyl diphosphate biosynthesis via DXP pathway; isopentenyl diphosphate from 1-deoxy-D-xylulose 5-phosphate: step 6/6. Catalyzes the conversion of 1-hydroxy-2-methyl-2-(E)-butenyl 4-diphosphate (HMBPP) into a mixture of isopentenyl diphosphate (IPP) and dimethylallyl diphosphate (DMAPP). Acts in the terminal step of the DOXP/MEP pathway for isoprenoid precursor biosynthesis. The protein is 4-hydroxy-3-methylbut-2-enyl diphosphate reductase of Prochlorococcus marinus (strain MIT 9211).